A 234-amino-acid polypeptide reads, in one-letter code: Small ribosomal subunit protein eS4 (234 aa).

Residues 39–102 form the S4 RNA-binding domain; it reads MPLVVVLRDL…NANYRVVIGM (64 aa).

The protein belongs to the eukaryotic ribosomal protein eS4 family.

This is Small ribosomal subunit protein eS4 from Methanocella arvoryzae (strain DSM 22066 / NBRC 105507 / MRE50).